The following is a 338-amino-acid chain: Phosphoribosylformylglycinamidine cyclo-ligase (338 aa).

It belongs to the AIR synthase family.

The protein resides in the cytoplasm. It carries out the reaction 2-formamido-N(1)-(5-O-phospho-beta-D-ribosyl)acetamidine + ATP = 5-amino-1-(5-phospho-beta-D-ribosyl)imidazole + ADP + phosphate + H(+). It functions in the pathway purine metabolism; IMP biosynthesis via de novo pathway; 5-amino-1-(5-phospho-D-ribosyl)imidazole from N(2)-formyl-N(1)-(5-phospho-D-ribosyl)glycinamide: step 2/2. This chain is Phosphoribosylformylglycinamidine cyclo-ligase, found in Lactococcus lactis subsp. lactis (strain IL1403) (Streptococcus lactis).